Reading from the N-terminus, the 102-residue chain is Small ribosomal subunit protein uS10 (102 aa).

It belongs to the universal ribosomal protein uS10 family. In terms of assembly, part of the 30S ribosomal subunit.

Its function is as follows. Involved in the binding of tRNA to the ribosomes. This chain is Small ribosomal subunit protein uS10, found in Clostridium novyi (strain NT).